The chain runs to 342 residues: tRNA-specific 2-thiouridylase MnmA (342 aa).

ATP is bound by residues 6–13 (LLSGGVDS) and Leu-32. Catalysis depends on Cys-92, which acts as the Nucleophile. Residues Cys-92 and Cys-191 are joined by a disulfide bond. ATP is bound at residue Gly-116. Residues 138–140 (KDQ) are interaction with tRNA. The active-site Cysteine persulfide intermediate is Cys-191. The interaction with tRNA stretch occupies residues 293–294 (RY).

This sequence belongs to the MnmA/TRMU family.

It is found in the cytoplasm. The catalysed reaction is S-sulfanyl-L-cysteinyl-[protein] + uridine(34) in tRNA + AH2 + ATP = 2-thiouridine(34) in tRNA + L-cysteinyl-[protein] + A + AMP + diphosphate + H(+). Catalyzes the 2-thiolation of uridine at the wobble position (U34) of tRNA, leading to the formation of s(2)U34. The protein is tRNA-specific 2-thiouridylase MnmA of Helicobacter pylori (strain ATCC 700392 / 26695) (Campylobacter pylori).